A 583-amino-acid polypeptide reads, in one-letter code: Potassium-transporting ATPase potassium-binding subunit (583 aa).

Transmembrane regions (helical) follow at residues 3-23, 66-86, 135-155, 177-197, 266-286, 293-313, 402-422, 440-460, 506-526, and 549-569; these read NIIW…WPLG, MACV…LLMA, GLTV…FALI, VLYI…EQGV, LEML…GAKI, VAIF…TVQA, GLYG…LMVG, AVVV…LMCL, VLLG…ILAM, and LFIF…FFPA.

The protein belongs to the KdpA family. The system is composed of three essential subunits: KdpA, KdpB and KdpC.

It localises to the cell inner membrane. Its function is as follows. Part of the high-affinity ATP-driven potassium transport (or Kdp) system, which catalyzes the hydrolysis of ATP coupled with the electrogenic transport of potassium into the cytoplasm. This subunit binds the periplasmic potassium ions and delivers the ions to the membrane domain of KdpB through an intramembrane tunnel. In Desulfovibrio desulfuricans (strain ATCC 27774 / DSM 6949 / MB), this protein is Potassium-transporting ATPase potassium-binding subunit.